Consider the following 226-residue polypeptide: Putative uroporphyrinogen-III synthase (226 aa).

This sequence belongs to the uroporphyrinogen-III synthase family.

The enzyme catalyses hydroxymethylbilane = uroporphyrinogen III + H2O. It participates in porphyrin-containing compound metabolism; protoporphyrin-IX biosynthesis; coproporphyrinogen-III from 5-aminolevulinate: step 3/4. In terms of biological role, catalyzes cyclization of the linear tetrapyrrole, hydroxymethylbilane, to the macrocyclic uroporphyrinogen III. This Archaeoglobus fulgidus (strain ATCC 49558 / DSM 4304 / JCM 9628 / NBRC 100126 / VC-16) protein is Putative uroporphyrinogen-III synthase.